A 370-amino-acid chain; its full sequence is NSFL1 cofactor p47 (370 aa).

The tract at residues 54 to 73 (SQATPSSVSRGTAPSDNRVT) is disordered. Phosphoserine occurs at positions 74, 102, 114, and 140. 2 disordered regions span residues 80–116 (HDQDEEEEEEEGQRFYAGGSERSGQQIVGPPRKKSPN) and 138–157 (TKSPGETSKPRPFAGGGYRL). The Nuclear localization signal motif lies at 109-115 (PPRKKSP). Phosphotyrosine is present on Y167. Positions 172 to 175 (RRRH) match the Nuclear localization signal motif. S176, S192, and S272 each carry phosphoserine. Residues 179–244 (DVHVVLKLWK…MEDHRDEDFV (66 aa)) form the SEP domain. The region spanning 291-368 (EAEPTTNIQI…NLLNAVIVQR (78 aa)) is the UBX domain.

Belongs to the NSFL1C family. As to quaternary structure, part of a ternary complex containing STX5A, NSFL1C and VCP. NSFL1C forms a homotrimer that binds to one end of a VCP homohexamer. The complex binds to membranes enriched in phosphatidylethanolamine-containing lipids and promotes Golgi membrane fusion. Interaction with VCIP135 leads to dissociation of the complex via ATP hydrolysis by VCP. Binds ubiquitin and mono-ubiquitinated proteins via its N-terminal UBA-like domain when bound to VCP. In terms of processing, phosphorylated during mitosis. Phosphorylation inhibits interaction with Golgi membranes and is required for the fragmentation of the Golgi stacks during mitosis.

The protein localises to the nucleus. It localises to the golgi apparatus. The protein resides in the golgi stack. Its subcellular location is the chromosome. It is found in the cytoplasm. The protein localises to the cytoskeleton. It localises to the microtubule organizing center. The protein resides in the centrosome. Reduces the ATPase activity of VCP. Necessary for the fragmentation of Golgi stacks during mitosis and for VCP-mediated reassembly of Golgi stacks after mitosis. May play a role in VCP-mediated formation of transitional endoplasmic reticulum (tER). Inhibits the activity of CTSL (in vitro). Together with UBXN2B/p37, regulates the centrosomal levels of kinase AURKA/Aurora A during mitotic progression by promoting AURKA removal from centrosomes in prophase. Also, regulates spindle orientation during mitosis. The sequence is that of NSFL1 cofactor p47 (Nsfl1c) from Mus musculus (Mouse).